A 314-amino-acid chain; its full sequence is Coproporphyrin III ferrochelatase (314 aa).

The Fe(2+) site is built by His186 and Glu268.

The protein belongs to the ferrochelatase family.

The protein localises to the cytoplasm. The catalysed reaction is Fe-coproporphyrin III + 2 H(+) = coproporphyrin III + Fe(2+). Its pathway is porphyrin-containing compound metabolism; protoheme biosynthesis. Its function is as follows. Involved in coproporphyrin-dependent heme b biosynthesis. Catalyzes the insertion of ferrous iron into coproporphyrin III to form Fe-coproporphyrin III. The polypeptide is Coproporphyrin III ferrochelatase (Lactococcus lactis subsp. lactis (strain IL1403) (Streptococcus lactis)).